We begin with the raw amino-acid sequence, 61 residues long: Large ribosomal subunit protein eL24 (61 aa).

Cys-7, Cys-10, Cys-33, and Cys-37 together coordinate Zn(2+). The C4-type zinc-finger motif lies at 7-37; that stretch reads CSFCGKEIPPATGLMYIRNDGSILWFCSNKC.

Belongs to the eukaryotic ribosomal protein eL24 family. In terms of assembly, part of the 50S ribosomal subunit. Forms a cluster with proteins L3 and L14. It depends on Zn(2+) as a cofactor.

Binds to the 23S rRNA. The polypeptide is Large ribosomal subunit protein eL24 (Sulfurisphaera tokodaii (strain DSM 16993 / JCM 10545 / NBRC 100140 / 7) (Sulfolobus tokodaii)).